Here is a 258-residue protein sequence, read N- to C-terminus: Tryptophan synthase alpha chain (258 aa).

Catalysis depends on proton acceptor residues Glu-50 and Asp-61.

The protein belongs to the TrpA family. Tetramer of two alpha and two beta chains.

It catalyses the reaction (1S,2R)-1-C-(indol-3-yl)glycerol 3-phosphate + L-serine = D-glyceraldehyde 3-phosphate + L-tryptophan + H2O. It participates in amino-acid biosynthesis; L-tryptophan biosynthesis; L-tryptophan from chorismate: step 5/5. Functionally, the alpha subunit is responsible for the aldol cleavage of indoleglycerol phosphate to indole and glyceraldehyde 3-phosphate. This is Tryptophan synthase alpha chain from Clostridium beijerinckii (strain ATCC 51743 / NCIMB 8052) (Clostridium acetobutylicum).